We begin with the raw amino-acid sequence, 192 residues long: Cytidylate kinase (192 aa).

7-15 (GPPGSGKST) is a binding site for ATP.

It belongs to the cytidylate kinase family. Type 2 subfamily.

It localises to the cytoplasm. It carries out the reaction CMP + ATP = CDP + ADP. It catalyses the reaction dCMP + ATP = dCDP + ADP. The protein is Cytidylate kinase of Halobacterium salinarum (strain ATCC 29341 / DSM 671 / R1).